Consider the following 462-residue polypeptide: MAAAVNLELDPIFLKALGFLHSKSKDSAEKLKTLLDESLARGIDSSYRPSQKDVEPPKISSTKTVSVKQEPKTSSSLPSGNNNGKVLTTEKVKKEGEKRPADKMKSDITEGADVPKKPRLEKPETRSSPITVQTSKDLAMADLSSFEETSADDFAMEMGLACVVCRQMTVASGNQLVECQECHNLYHQDCHKPQVTDKEVTDPRLVWYCARCTRQMKRMAQKTQKPPQKPAPTVVSVAPAVKDPLVKKPETKLKPETTFLAFKRSEVKASTVVSGNSSSTNVSSSATSGLIGWAAFAAKTTSAGPSTAKLSSAAQNNSGKPATSSANQKPVGLTGLATTSKGGIGSKIGSSNSTSPTVPLKPPPPLTLGKTGLSRSVSCDNVSKVGLPSPSSLVPGSSSQLSGNGNSGTSGPSGSTTNKTASEPSTSPSASLKGPTSQESQLNAMKRLQMVKKKAAQKKLKK.

Positions 39–132 are disordered; that stretch reads LARGIDSSYR…PETRSSPITV (94 aa). Residues 59–86 show a composition bias toward polar residues; sequence ISSTKTVSVKQEPKTSSSLPSGNNNGKV. Residue lysine 68 forms a Glycyl lysine isopeptide (Lys-Gly) (interchain with G-Cter in SUMO2) linkage. The segment covering 88 to 125 has biased composition (basic and acidic residues); sequence TTEKVKKEGEKRPADKMKSDITEGADVPKKPRLEKPET. At serine 128 the chain carries Phosphoserine. The PHD-type zinc-finger motif lies at 159–215; sequence GLACVVCRQMTVASGNQLVECQECHNLYHQDCHKPQVTDKEVTDPRLVWYCARCTRQ. Residue lysine 254 forms a Glycyl lysine isopeptide (Lys-Gly) (interchain with G-Cter in SUMO2) linkage. Residues 305-328 are compositionally biased toward polar residues; the sequence is PSTAKLSSAAQNNSGKPATSSANQ. Positions 305 to 462 are disordered; it reads PSTAKLSSAA…KKAAQKKLKK (158 aa). 2 stretches are compositionally biased toward low complexity: residues 347–358 and 382–431; these read KIGSSNSTSPTV and VSKV…PSAS. Over residues 434–443 the composition is skewed to polar residues; the sequence is GPTSQESQLN. Over residues 449–462 the composition is skewed to basic residues; it reads QMVKKKAAQKKLKK.

This sequence belongs to the Integrator subunit 12 family. Component of the Integrator complex, composed of core subunits INTS1, INTS2, INTS3, INTS4, INTS5, INTS6, INTS7, INTS8, INTS9/RC74, INTS10, INTS11/CPSF3L, INTS12, INTS13, INTS14 and INTS15. The core complex associates with protein phosphatase 2A subunits PPP2CA and PPP2R1A, to form the Integrator-PP2A (INTAC) complex. Dephosphorylated at Ser-128 by the PNUTS-PP1 complex, promoting RNA polymerase II transcription pause-release.

The protein resides in the nucleus. Its function is as follows. Component of the integrator complex, a multiprotein complex that terminates RNA polymerase II (Pol II) transcription in the promoter-proximal region of genes. The integrator complex provides a quality checkpoint during transcription elongation by driving premature transcription termination of transcripts that are unfavorably configured for transcriptional elongation: the complex terminates transcription by (1) catalyzing dephosphorylation of the C-terminal domain (CTD) of Pol II subunit POLR2A/RPB1 and SUPT5H/SPT5, (2) degrading the exiting nascent RNA transcript via endonuclease activity and (3) promoting the release of Pol II from bound DNA. The integrator complex is also involved in terminating the synthesis of non-coding Pol II transcripts, such as enhancer RNAs (eRNAs), small nuclear RNAs (snRNAs), telomerase RNAs and long non-coding RNAs (lncRNAs). Mediates recruitment of cytoplasmic dynein to the nuclear envelope, probably as component of the integrator complex. In Bos taurus (Bovine), this protein is Integrator complex subunit 12 (INTS12).